The primary structure comprises 241 residues: MTEGEGRIQLEPSWKARVGDWLLRPQMRELSAFLRQRKAAGARVFPPGPQIFAAFDATPFEQVKVVILGQDPYHGEGQAHGLCFSVLPGVPVPPSLLNIYKEIQDDLGIARPDHGYLMPWARQGVLLLNAVLTVEQGRAGAHQNKGWEGFTDHVVETLNREREGLVFLLWGSYAQSKGKVIDQTRHRVLKAPHPSPLSAHRGFLGCQHFSKTNDHLRRRGLSPIDWSLPPRSALDLTSAGA.

The Proton acceptor role is filled by Asp71.

The protein belongs to the uracil-DNA glycosylase (UDG) superfamily. UNG family.

It is found in the cytoplasm. It catalyses the reaction Hydrolyzes single-stranded DNA or mismatched double-stranded DNA and polynucleotides, releasing free uracil.. Its function is as follows. Excises uracil residues from the DNA which can arise as a result of misincorporation of dUMP residues by DNA polymerase or due to deamination of cytosine. The protein is Uracil-DNA glycosylase of Xanthomonas axonopodis pv. citri (strain 306).